A 332-amino-acid polypeptide reads, in one-letter code: Glycerol-3-phosphate dehydrogenase [NAD(P)+] (332 aa).

NADPH is bound by residues Ser11, Trp12, Arg32, Arg33, and Lys106. The sn-glycerol 3-phosphate site is built by Lys106 and Gly136. NADPH is bound at residue Ala140. Sn-glycerol 3-phosphate contacts are provided by Lys191, Asp244, Ser254, Arg255, and Asn256. Lys191 acts as the Proton acceptor in catalysis. Arg255 lines the NADPH pocket. Positions 280 and 282 each coordinate NADPH.

This sequence belongs to the NAD-dependent glycerol-3-phosphate dehydrogenase family.

Its subcellular location is the cytoplasm. The enzyme catalyses sn-glycerol 3-phosphate + NAD(+) = dihydroxyacetone phosphate + NADH + H(+). The catalysed reaction is sn-glycerol 3-phosphate + NADP(+) = dihydroxyacetone phosphate + NADPH + H(+). The protein operates within membrane lipid metabolism; glycerophospholipid metabolism. In terms of biological role, catalyzes the reduction of the glycolytic intermediate dihydroxyacetone phosphate (DHAP) to sn-glycerol 3-phosphate (G3P), the key precursor for phospholipid synthesis. This chain is Glycerol-3-phosphate dehydrogenase [NAD(P)+], found in Corynebacterium urealyticum (strain ATCC 43042 / DSM 7109).